The following is a 408-amino-acid chain: Tryptophan synthase beta chain (408 aa).

K103 carries the post-translational modification N6-(pyridoxal phosphate)lysine.

The protein belongs to the TrpB family. As to quaternary structure, tetramer of two alpha and two beta chains. It depends on pyridoxal 5'-phosphate as a cofactor.

The enzyme catalyses (1S,2R)-1-C-(indol-3-yl)glycerol 3-phosphate + L-serine = D-glyceraldehyde 3-phosphate + L-tryptophan + H2O. Its pathway is amino-acid biosynthesis; L-tryptophan biosynthesis; L-tryptophan from chorismate: step 5/5. Its function is as follows. The beta subunit is responsible for the synthesis of L-tryptophan from indole and L-serine. This chain is Tryptophan synthase beta chain, found in Koribacter versatilis (strain Ellin345).